The sequence spans 350 residues: Transmembrane protein 185B (350 aa).

Transmembrane regions (helical) follow at residues 16 to 36 (LIYACLLLFSVLLPLRLDGVI), 41 to 61 (WAVFAPIWLWKLLVLAGASVG), 81 to 101 (FKAMLIAVGIHLLLLMFEVLV), 111 to 131 (FWLLVFMPLFFVSPVSVAACV), 168 to 188 (WLVVFVPLWILMSFLCLVVLY), 211 to 231 (VTMAICWITIVVPLLIFEVLL), and 240 to 260 (MFSYISIFVPLWLSLITLMAT).

The protein belongs to the TMEM185 family.

Its subcellular location is the membrane. This is Transmembrane protein 185B (TMEM185B) from Bos taurus (Bovine).